The chain runs to 337 residues: Protein LEG1 homolog (337 aa).

An N-terminal signal peptide occupies residues 1 to 20 (MAVLASWVWVLAGCFCAAVA). Residue asparagine 171 is glycosylated (N-linked (GlcNAc...) asparagine).

This sequence belongs to the LEG1 family.

The protein resides in the secreted. Its function is as follows. May be involved in early liver development. This chain is Protein LEG1 homolog, found in Mus musculus (Mouse).